A 600-amino-acid polypeptide reads, in one-letter code: Adenine deaminase (600 aa).

It belongs to the metallo-dependent hydrolases superfamily. Adenine deaminase family. It depends on Mn(2+) as a cofactor.

It carries out the reaction adenine + H2O + H(+) = hypoxanthine + NH4(+). This Chelativorans sp. (strain BNC1) protein is Adenine deaminase.